The chain runs to 430 residues: MHLSSLLVAVLLPLALSKPTPRKKPGSFTVHLARRSEAEYARDGPTDLQRAYAKYGIPSTQGMDGYRPEPISRFQGNSKIAGGAPGAKDDGKDEKGEVENNPTSHDIQFLSPVTIGGQPFIMNFDTGSSDTWVMNTDMDDEEAKKDHHLYDPRKSKTYSKLDGLTFSIKYGDKSHASGPVITDVMDIGGATVRKQAIGLPTKVAASLANDKSSDGLVGLAMNKLNTVRPDKQKTFFENLAEDLDEPVFTAQLRKGKMGSYEFGAIDKTKYAGDLVNVPVNNKNGFWEISSALYSVGQLDKIQKVENGTGTAILDTGTTLLILDEEVVKAYYAQVKGARYDASRYAGWVYPCNASMPSLFLAVGHDHMAIIPSSLLTFQNYGPGPDGTDVCYGGLQSNNAGGIQILGDVFFKALFVVFDYRGPSVSLAPHA.

An N-terminal signal peptide occupies residues 1 to 17 (MHLSSLLVAVLLPLALS). The propeptide at 18 to 87 (KPTPRKKPGS…SKIAGGAPGA (70 aa)) is activation peptide. The interval 59-105 (STQGMDGYRPEPISRFQGNSKIAGGAPGAKDDGKDEKGEVENNPTSH) is disordered. Residues 87–98 (AKDDGKDEKGEV) show a composition bias toward basic and acidic residues. The Peptidase A1 domain occupies 109–427 (FLSPVTIGGQ…DYRGPSVSLA (319 aa)). Asp-125 is a catalytic residue. N-linked (GlcNAc...) asparagine glycosylation occurs at Asn-306. Residue Asp-314 is part of the active site. N-linked (GlcNAc...) asparagine glycosylation occurs at Asn-352.

This sequence belongs to the peptidase A1 family.

Its subcellular location is the secreted. The chain is Putative aspergillopepsin A-like aspartic endopeptidase MCYG_07979 from Arthroderma otae (strain ATCC MYA-4605 / CBS 113480) (Microsporum canis).